The sequence spans 421 residues: 3-isopropylmalate dehydratase large subunit (421 aa).

Residues cysteine 300, cysteine 360, and cysteine 363 each contribute to the [4Fe-4S] cluster site.

The protein belongs to the aconitase/IPM isomerase family. LeuC type 2 subfamily. Heterodimer of LeuC and LeuD. [4Fe-4S] cluster serves as cofactor.

The catalysed reaction is (2R,3S)-3-isopropylmalate = (2S)-2-isopropylmalate. Its pathway is amino-acid biosynthesis; L-leucine biosynthesis; L-leucine from 3-methyl-2-oxobutanoate: step 2/4. Catalyzes the isomerization between 2-isopropylmalate and 3-isopropylmalate, via the formation of 2-isopropylmaleate. The sequence is that of 3-isopropylmalate dehydratase large subunit from Thermodesulfovibrio yellowstonii (strain ATCC 51303 / DSM 11347 / YP87).